A 244-amino-acid chain; its full sequence is 5-oxoprolinase subunit A (244 aa).

Belongs to the LamB/PxpA family. As to quaternary structure, forms a complex composed of PxpA, PxpB and PxpC.

The catalysed reaction is 5-oxo-L-proline + ATP + 2 H2O = L-glutamate + ADP + phosphate + H(+). Functionally, catalyzes the cleavage of 5-oxoproline to form L-glutamate coupled to the hydrolysis of ATP to ADP and inorganic phosphate. The polypeptide is 5-oxoprolinase subunit A (Escherichia coli (strain SMS-3-5 / SECEC)).